The following is a 254-amino-acid chain: 5-oxoprolinase subunit A (254 aa).

The protein belongs to the LamB/PxpA family. Forms a complex composed of PxpA, PxpB and PxpC.

The catalysed reaction is 5-oxo-L-proline + ATP + 2 H2O = L-glutamate + ADP + phosphate + H(+). In terms of biological role, catalyzes the cleavage of 5-oxoproline to form L-glutamate coupled to the hydrolysis of ATP to ADP and inorganic phosphate. This is 5-oxoprolinase subunit A from Burkholderia orbicola (strain MC0-3).